We begin with the raw amino-acid sequence, 669 residues long: DNA ligase (669 aa).

NAD(+)-binding positions include 34–38, 83–84, and E114; these read DAEYD and SL. The active-site N6-AMP-lysine intermediate is K116. Positions 137, 171, 287, and 311 each coordinate NAD(+). Zn(2+) is bound by residues C405, C408, C423, and C428. The region spanning 591–669 is the BRCT domain; it reads NVESYFAGKT…EERFLQELNK (79 aa).

The protein belongs to the NAD-dependent DNA ligase family. LigA subfamily. Mg(2+) is required as a cofactor. It depends on Mn(2+) as a cofactor.

It carries out the reaction NAD(+) + (deoxyribonucleotide)n-3'-hydroxyl + 5'-phospho-(deoxyribonucleotide)m = (deoxyribonucleotide)n+m + AMP + beta-nicotinamide D-nucleotide.. Its function is as follows. DNA ligase that catalyzes the formation of phosphodiester linkages between 5'-phosphoryl and 3'-hydroxyl groups in double-stranded DNA using NAD as a coenzyme and as the energy source for the reaction. It is essential for DNA replication and repair of damaged DNA. This is DNA ligase from Bacillus cereus (strain AH820).